The chain runs to 402 residues: Arginine deiminase (402 aa).

Cysteine 391 (amidino-cysteine intermediate) is an active-site residue.

The protein belongs to the arginine deiminase family.

The protein resides in the cytoplasm. The enzyme catalyses L-arginine + H2O = L-citrulline + NH4(+). It participates in amino-acid degradation; L-arginine degradation via ADI pathway; carbamoyl phosphate from L-arginine: step 1/2. The sequence is that of Arginine deiminase from Mycobacterium marinum (strain ATCC BAA-535 / M).